A 72-amino-acid polypeptide reads, in one-letter code: Conotoxin 3 (72 aa).

The N-terminal stretch at 1 to 22 (MKLTCVVIVAVLLLTACQLITA) is a signal peptide. A propeptide spanning residues 23-46 (DDSRGTQEHRALRSDTKLSMLTLR) is cleaved from the precursor. Intrachain disulfides connect C47–C61, C54–C64, and C60–C71.

The protein belongs to the conotoxin O1 superfamily. As to expression, expressed by the venom duct.

It localises to the secreted. In Conus striatus (Striated cone), this protein is Conotoxin 3.